We begin with the raw amino-acid sequence, 485 residues long: MDATRKPLRIPPAMAVYAEEHGVFDIIQKMVEKVLVDRPEDPIQYMIDHLSNDNDDVPRVFILGPPASGKHTMAKLLCKRLNATHLTPENVLSSDVSLLVKEAQSYRDKGQEVPDELWAKLMRERLSQVDCIKRGWVLEGFPKTRDQALMLQMAGVCPGHLVVLDAPDIVLIERNMGKRIDITDGEVYHTTFDWPSDPAVQRNLVEPEGISEEETGQRLLEFHRNIPGLLRTYSKVSKKINVDQPYMDVFSQVLTFVLSKQRSLAPHTPRILLYGPPGSGRSLQASLLAQKYGIINICCGQVLKEAVADQTKLGELIQPYIENDQQVPDNFVLKILTDHLSSLESAKHGWVLHGFPQDTDQAALLKDAGFMPNRVFSLDLSDDVVIERLSLCMTDPVSGERYHSIYKPAPRSEVQERLQQNPKYSEEKVQARLDVYHANADELEEFYQDVIHINADQDPYTVFEFIESYIVSPLPKSLPEEPTSP.

2 adenylate kinase regions span residues 58–258 (PRVF…TFVL) and 269–471 (PRIL…SYIV). Position 67 to 72 (67 to 72 (ASGKHT)) interacts with ATP. An NMP 1 region spans residues 87-113 (TPENVLSSDVSLLVKEAQSYRDKGQEV). AMP contacts are provided by residues 140 to 143 (GFPK) and Gln147. Residues 177 to 206 (GKRIDITDGEVYHTTFDWPSDPAVQRNLVE) form an LID 1 region. Arg218 is an AMP binding site. 278–283 (GSGRSL) lines the ATP pocket. An NMP 2 region spans residues 298–327 (CCGQVLKEAVADQTKLGELIQPYIENDQQV). AMP is bound by residues 325–327 (QQV), 354–357 (GFPQ), and Gln361. The interval 391 to 424 (LCMTDPVSGERYHSIYKPAPRSEVQERLQQNPKY) is LID 2. Residue Arg432 coordinates AMP.

The protein belongs to the adenylate kinase family.

It localises to the cytoplasm. The protein localises to the cytosol. The catalysed reaction is AMP + ATP = 2 ADP. It catalyses the reaction a 2'-deoxyribonucleoside 5'-diphosphate + ATP = a 2'-deoxyribonucleoside 5'-triphosphate + ADP. It carries out the reaction a ribonucleoside 5'-diphosphate + ATP = a ribonucleoside 5'-triphosphate + ADP. Nucleoside monophosphate (NMP) kinase that catalyzes the reversible transfer of the terminal phosphate group between nucleoside triphosphates and monophosphates. Has highest activity toward AMP, and weaker activity toward dAMP, CMP and dCMP. Also displays broad nucleoside diphosphate kinase activity. This Xenopus laevis (African clawed frog) protein is Adenylate kinase 8 (ak8).